We begin with the raw amino-acid sequence, 245 residues long: tRNA pseudouridine synthase A (245 aa).

Aspartate 52 acts as the Nucleophile in catalysis. Tyrosine 111 provides a ligand contact to substrate.

Belongs to the tRNA pseudouridine synthase TruA family. Homodimer.

The enzyme catalyses uridine(38/39/40) in tRNA = pseudouridine(38/39/40) in tRNA. In terms of biological role, formation of pseudouridine at positions 38, 39 and 40 in the anticodon stem and loop of transfer RNAs. In Ehrlichia canis (strain Jake), this protein is tRNA pseudouridine synthase A.